The sequence spans 81 residues: MAVRIRLKRMGAKNNPFYRIVVADSRTPRDGKTIDEIGYYNPLKNPADIKVDVEKAKKWLSYGAQPTDTVKILLKKAGVIE.

The protein belongs to the bacterial ribosomal protein bS16 family.

This chain is Small ribosomal subunit protein bS16, found in Caldicellulosiruptor bescii (strain ATCC BAA-1888 / DSM 6725 / KCTC 15123 / Z-1320) (Anaerocellum thermophilum).